The primary structure comprises 269 residues: Indole-3-glycerol phosphate synthase (269 aa).

This sequence belongs to the TrpC family.

The enzyme catalyses 1-(2-carboxyphenylamino)-1-deoxy-D-ribulose 5-phosphate + H(+) = (1S,2R)-1-C-(indol-3-yl)glycerol 3-phosphate + CO2 + H2O. The protein operates within amino-acid biosynthesis; L-tryptophan biosynthesis; L-tryptophan from chorismate: step 4/5. This is Indole-3-glycerol phosphate synthase from Rhodococcus opacus (strain B4).